The chain runs to 93 residues: Small ribosomal subunit protein uS19 (93 aa).

Belongs to the universal ribosomal protein uS19 family.

Protein S19 forms a complex with S13 that binds strongly to the 16S ribosomal RNA. This Rhodococcus erythropolis (strain PR4 / NBRC 100887) protein is Small ribosomal subunit protein uS19.